Reading from the N-terminus, the 347-residue chain is Probable dual-specificity RNA methyltransferase RlmN (347 aa).

Glutamate 90 acts as the Proton acceptor in catalysis. One can recognise a Radical SAM core domain in the interval tyrosine 96–aspartate 326. The cysteines at positions 103 and 331 are disulfide-linked. Positions 110, 114, and 117 each coordinate [4Fe-4S] cluster. S-adenosyl-L-methionine contacts are provided by residues glycine 157–glutamate 158, serine 189, serine 212–histidine 214, and asparagine 288. The active-site S-methylcysteine intermediate is cysteine 331.

This sequence belongs to the radical SAM superfamily. RlmN family. Requires [4Fe-4S] cluster as cofactor.

Its subcellular location is the cytoplasm. It carries out the reaction adenosine(2503) in 23S rRNA + 2 reduced [2Fe-2S]-[ferredoxin] + 2 S-adenosyl-L-methionine = 2-methyladenosine(2503) in 23S rRNA + 5'-deoxyadenosine + L-methionine + 2 oxidized [2Fe-2S]-[ferredoxin] + S-adenosyl-L-homocysteine. It catalyses the reaction adenosine(37) in tRNA + 2 reduced [2Fe-2S]-[ferredoxin] + 2 S-adenosyl-L-methionine = 2-methyladenosine(37) in tRNA + 5'-deoxyadenosine + L-methionine + 2 oxidized [2Fe-2S]-[ferredoxin] + S-adenosyl-L-homocysteine. Its function is as follows. Specifically methylates position 2 of adenine 2503 in 23S rRNA and position 2 of adenine 37 in tRNAs. In Clostridium botulinum (strain Alaska E43 / Type E3), this protein is Probable dual-specificity RNA methyltransferase RlmN.